Consider the following 183-residue polypeptide: Peptide methionine sulfoxide reductase MsrA 1 (183 aa).

The active site involves Cys12.

It belongs to the MsrA Met sulfoxide reductase family.

It carries out the reaction L-methionyl-[protein] + [thioredoxin]-disulfide + H2O = L-methionyl-(S)-S-oxide-[protein] + [thioredoxin]-dithiol. The enzyme catalyses [thioredoxin]-disulfide + L-methionine + H2O = L-methionine (S)-S-oxide + [thioredoxin]-dithiol. Its function is as follows. Has an important function as a repair enzyme for proteins that have been inactivated by oxidation. Catalyzes the reversible oxidation-reduction of methionine sulfoxide in proteins to methionine. The sequence is that of Peptide methionine sulfoxide reductase MsrA 1 (msrA1) from Lactococcus lactis subsp. lactis (strain IL1403) (Streptococcus lactis).